Consider the following 291-residue polypeptide: Probable cell wall amidase LytH (291 aa).

Residues 1–40 form the signal peptide; the sequence is MKKIEAWLSKKGLKNKRTLIVVIAFVLFIIFLFLLLNSNS. In terms of domain architecture, SH3b spans 41–105; the sequence is EDSGNITITE…WIAGWHTNLD (65 aa). Residues 118 to 140 are disordered; the sequence is QGKTIVLDPGHGGSDQGASSNTK. The MurNAc-LAA domain maps to 122–286; the sequence is IVLDPGHGGS…LEQAIVDGLK (165 aa).

This sequence belongs to the N-acetylmuramoyl-L-alanine amidase 3 family.

It is found in the secreted. Probably involved in cell-wall metabolism. This Staphylococcus aureus (strain USA300) protein is Probable cell wall amidase LytH (lytH).